We begin with the raw amino-acid sequence, 514 residues long: 23S rRNA (uracil(1939)-C(5))-methyltransferase RlmD (514 aa).

Residues Cys-70, Cys-76, Cys-79, and Cys-158 each coordinate [4Fe-4S] cluster. Residues Gln-272, Phe-301, Asn-306, Glu-322, Asn-350, and Asp-371 each coordinate S-adenosyl-L-methionine. The active-site Nucleophile is Cys-398.

The protein belongs to the class I-like SAM-binding methyltransferase superfamily. RNA M5U methyltransferase family. RlmD subfamily.

It carries out the reaction uridine(1939) in 23S rRNA + S-adenosyl-L-methionine = 5-methyluridine(1939) in 23S rRNA + S-adenosyl-L-homocysteine + H(+). Catalyzes the formation of 5-methyl-uridine at position 1939 (m5U1939) in 23S rRNA. This is 23S rRNA (uracil(1939)-C(5))-methyltransferase RlmD from Chromobacterium violaceum (strain ATCC 12472 / DSM 30191 / JCM 1249 / CCUG 213 / NBRC 12614 / NCIMB 9131 / NCTC 9757 / MK).